Reading from the N-terminus, the 465-residue chain is UDP-glucose:undecaprenyl-phosphate glucose-1-phosphate transferase (465 aa).

The next 5 helical transmembrane spans lie at 23–43, 46–66, 82–102, 105–125, and 280–300; these read FSDILIIFLGIYFSCFINDYF, LHYVLMALVALVVFQMIGGIT, ILILKNWSLSFLLTLGFVTLF, FDLTFRTFIFWYLAVCAGFVV, and IIVSSLILILISPILLVIATA.

The protein belongs to the bacterial sugar transferase family.

It localises to the cell inner membrane. It catalyses the reaction di-trans,octa-cis-undecaprenyl phosphate + UDP-alpha-D-glucose = alpha-D-glucosyl di-trans,octa-cis-undecaprenyl diphosphate + UMP. The protein operates within capsule biogenesis; capsule polysaccharide biosynthesis. Functionally, is likely the initiating enzyme for the K2 capsular polysaccharide synthesis. Catalyzes the transfer of the glucose-1-phosphate moiety from UDP-Glc onto the carrier lipid undecaprenyl phosphate (C55-P), forming a phosphoanhydride bond yielding to glucosyl-pyrophosphoryl-undecaprenol (Glc-PP-C55). The sequence is that of UDP-glucose:undecaprenyl-phosphate glucose-1-phosphate transferase from Klebsiella pneumoniae.